The chain runs to 357 residues: UDP-N-acetylglucosamine--N-acetylmuramyl-(pentapeptide) pyrophosphoryl-undecaprenol N-acetylglucosamine transferase (357 aa).

Residues 15–17 (TGG), N124, R165, S194, and Q288 contribute to the UDP-N-acetyl-alpha-D-glucosamine site.

It belongs to the glycosyltransferase 28 family. MurG subfamily.

The protein localises to the cell inner membrane. It carries out the reaction di-trans,octa-cis-undecaprenyl diphospho-N-acetyl-alpha-D-muramoyl-L-alanyl-D-glutamyl-meso-2,6-diaminopimeloyl-D-alanyl-D-alanine + UDP-N-acetyl-alpha-D-glucosamine = di-trans,octa-cis-undecaprenyl diphospho-[N-acetyl-alpha-D-glucosaminyl-(1-&gt;4)]-N-acetyl-alpha-D-muramoyl-L-alanyl-D-glutamyl-meso-2,6-diaminopimeloyl-D-alanyl-D-alanine + UDP + H(+). It participates in cell wall biogenesis; peptidoglycan biosynthesis. Functionally, cell wall formation. Catalyzes the transfer of a GlcNAc subunit on undecaprenyl-pyrophosphoryl-MurNAc-pentapeptide (lipid intermediate I) to form undecaprenyl-pyrophosphoryl-MurNAc-(pentapeptide)GlcNAc (lipid intermediate II). The protein is UDP-N-acetylglucosamine--N-acetylmuramyl-(pentapeptide) pyrophosphoryl-undecaprenol N-acetylglucosamine transferase of Nostoc sp. (strain PCC 7120 / SAG 25.82 / UTEX 2576).